Consider the following 408-residue polypeptide: Phosphoglycerate kinase (408 aa).

Residues 22-24, Arg39, 60-63, Arg117, and Arg157 contribute to the substrate site; these read DIN and HQSR. ATP-binding positions include Glu332 and 358–361; that span reads GGHT.

Belongs to the phosphoglycerate kinase family. As to quaternary structure, monomer.

The protein localises to the cytoplasm. The enzyme catalyses (2R)-3-phosphoglycerate + ATP = (2R)-3-phospho-glyceroyl phosphate + ADP. The protein operates within carbohydrate degradation; glycolysis; pyruvate from D-glyceraldehyde 3-phosphate: step 2/5. The protein is Phosphoglycerate kinase of Thermoplasma volcanium (strain ATCC 51530 / DSM 4299 / JCM 9571 / NBRC 15438 / GSS1).